A 219-amino-acid polypeptide reads, in one-letter code: Flagellar biosynthetic protein FliZ (219 aa).

The signal sequence occupies residues 1-26 (MKKSQYFIVFICFFVLFSVHPIAAAA). Positions 41–61 (KDEKTADQSEQKKEKTTKTAD) are enriched in basic and acidic residues. The interval 41-62 (KDEKTADQSEQKKEKTTKTADE) is disordered. A helical transmembrane segment spans residues 71 to 96 (VSAFDFVKMIFALLFVIVLIYGLVKL). Residues 200-212 (LEELKQNRSEGKK) are compositionally biased toward basic and acidic residues. Positions 200–219 (LEELKQNRSEGKKKGPRHHE) are disordered.

Its subcellular location is the cell membrane. Its function is as follows. May be a structural component of the flagellum that anchors the rod to the membrane. This chain is Flagellar biosynthetic protein FliZ (fliZ), found in Bacillus subtilis (strain 168).